The primary structure comprises 251 residues: MSTQPMPLSLTDAKPGQGEYRVRAGSEIRALLRRFADEELPITLATPDGVSYTTCLWADDPERAVLVLSADAADARVQRLIEAEEAVAVGYLDSVKIQFDLNGLMLVHGRDASALHAQFPREIYRFQRRDGFRVRPVGHACPELQLRVSGPTDTELTLRVLDLSHGGLALFLPDDQPALPVGTSVRAARLALDPLTQVQVALRVVHVAPLKESAHGSRLGCEIEGLSGVASRTLQRYIDQTQKRRRLLAVS.

Residues 127–239 enclose the PilZ domain; sequence QRRDGFRVRP…ASRTLQRYID (113 aa).

The protein belongs to the YcgR family. In terms of assembly, monomer. Interacts with the flagellar basal bodies.

Its subcellular location is the bacterial flagellum basal body. Acts as a flagellar brake, regulating swimming and swarming in a bis-(3'-5') cyclic diguanylic acid (c-di-GMP)-dependent manner. Binds 1 c-di-GMP dimer per subunit. Increasing levels of c-di-GMP lead to decreased motility. This chain is Flagellar brake protein YcgR, found in Leptothrix cholodnii (strain ATCC 51168 / LMG 8142 / SP-6) (Leptothrix discophora (strain SP-6)).